The sequence spans 344 residues: Heat-inducible transcription repressor hrcA (344 aa).

Belongs to the HrcA family.

In terms of biological role, negative regulator of class I heat shock genes (grpE-dnaK-dnaJ and groELS operons). Prevents heat-shock induction of these operons. The chain is Heat-inducible transcription repressor hrcA from Streptococcus pyogenes serotype M3 (strain ATCC BAA-595 / MGAS315).